The following is a 258-amino-acid chain: 5'-nucleotidase SurE (258 aa).

Positions 8, 9, 40, and 93 each coordinate a divalent metal cation.

It belongs to the SurE nucleotidase family. A divalent metal cation is required as a cofactor.

It is found in the cytoplasm. It carries out the reaction a ribonucleoside 5'-phosphate + H2O = a ribonucleoside + phosphate. In terms of biological role, nucleotidase that shows phosphatase activity on nucleoside 5'-monophosphates. This is 5'-nucleotidase SurE from Afipia carboxidovorans (strain ATCC 49405 / DSM 1227 / KCTC 32145 / OM5) (Oligotropha carboxidovorans).